The following is a 643-amino-acid chain: uncharacterized protein (643 aa).

Over residues 179–199 (FKSSQLQQSPSPNKKSPSYSQ) the composition is skewed to low complexity. 2 disordered regions span residues 179-200 (FKSS…YSQV) and 349-377 (KRSN…STEN).

This is an uncharacterized protein from Caenorhabditis elegans.